Here is a 161-residue protein sequence, read N- to C-terminus: M-phase phosphoprotein 6 (161 aa).

Residues lysine 37 and lysine 86 each participate in a glycyl lysine isopeptide (Lys-Gly) (interchain with G-Cter in SUMO2) cross-link. Serine 111 carries the post-translational modification Phosphoserine. The Nuclear localization signal motif lies at arginine 117–arginine 134. Residues lysine 128, lysine 151, and lysine 154 each participate in a glycyl lysine isopeptide (Lys-Gly) (interchain with G-Cter in SUMO2) cross-link.

Belongs to the MPP6 family. As to quaternary structure, associates with the RNA exosome complex, mediated by EXOSC3. Interacts with ARHGAP18. Interacts with exosome cofactors EXOSC10 and MTREX. Post-translationally, phosphorylated in M (mitotic) phase.

The protein resides in the nucleus. It localises to the nucleolus. It is found in the cytoplasm. Its function is as follows. RNA-binding protein that associates with the RNA exosome complex. Involved in the 3'-processing of the 7S pre-RNA to the mature 5.8S rRNA and plays a role in recruiting the RNA exosome complex to pre-rRNA; this function may include C1D. The polypeptide is M-phase phosphoprotein 6 (Mus musculus (Mouse)).